The chain runs to 313 residues: Kazal-type serine protease inhibitor domain-containing protein 1 (313 aa).

A signal peptide spans 1 to 37 (MPRVFTGLPANYAAPTLALSLLLPLLLVVWTQLPVSA). Residues 56 to 136 (EGEGCAPCRP…EVPEPLCVCR (81 aa)) form the IGFBP N-terminal domain. 7 cysteine pairs are disulfide-bonded: cysteine 60/cysteine 83, cysteine 63/cysteine 85, cysteine 68/cysteine 86, cysteine 74/cysteine 89, cysteine 97/cysteine 115, cysteine 109/cysteine 133, and cysteine 142/cysteine 175. The Kazal-like domain occupies 127–177 (EVPEPLCVCRSQRPLCGSDGRTYAQICRLQEAARARLDANLTVVHPGPCES). N-linked (GlcNAc...) asparagine glycans are attached at residues asparagine 166 and asparagine 190. The region spanning 179 to 276 (PQILSQPHNI…GQAEASATLT (98 aa)) is the Ig-like C2-type domain. A disulfide bond links cysteine 200 and cysteine 260. Residue asparagine 284 is glycosylated (N-linked (GlcNAc...) asparagine). A disordered region spans residues 290–313 (QLQSRSLFPEEEEEAESEELGDYY). Residues 298 to 313 (PEEEEEAESEELGDYY) are compositionally biased toward acidic residues.

Highly expressed in the spleen. Moderately expressed in the skin, lung and urinary bladder. Weakly expressed in the brain, tongue, esophagus, stomach, large intestine, liver and bone. Expressed in osteoblastic cells during bone regeneration. Expressed in secretory osteoblasts in the tooth.

Its subcellular location is the secreted. The protein resides in the extracellular space. It localises to the extracellular matrix. Its function is as follows. Involved in the proliferation of osteoblasts during bone formation and bone regeneration. Promotes matrix assembly. In Mus musculus (Mouse), this protein is Kazal-type serine protease inhibitor domain-containing protein 1 (Kazald1).